Reading from the N-terminus, the 340-residue chain is Phenylalanine--tRNA ligase alpha subunit (340 aa).

Glu255 contacts Mg(2+).

This sequence belongs to the class-II aminoacyl-tRNA synthetase family. Phe-tRNA synthetase alpha subunit type 1 subfamily. As to quaternary structure, tetramer of two alpha and two beta subunits. Mg(2+) is required as a cofactor.

The protein localises to the cytoplasm. The catalysed reaction is tRNA(Phe) + L-phenylalanine + ATP = L-phenylalanyl-tRNA(Phe) + AMP + diphosphate + H(+). The sequence is that of Phenylalanine--tRNA ligase alpha subunit from Moorella thermoacetica (strain ATCC 39073 / JCM 9320).